The primary structure comprises 71 residues: Small ribosomal subunit protein bS18 (71 aa).

The protein belongs to the bacterial ribosomal protein bS18 family. In terms of assembly, part of the 30S ribosomal subunit. Forms a tight heterodimer with protein bS6.

Binds as a heterodimer with protein bS6 to the central domain of the 16S rRNA, where it helps stabilize the platform of the 30S subunit. This chain is Small ribosomal subunit protein bS18, found in Nostoc punctiforme (strain ATCC 29133 / PCC 73102).